The following is a 360-amino-acid chain: Flavin-dependent trigonelline monooxygenase, oxygenase component (360 aa).

This sequence belongs to the bacterial luciferase oxidoreductase family. Homodimer. The trigonelline monooxygenase is composed of a reductase component TgnA and an oxygenase component TgnB.

It carries out the reaction N-methylnicotinate + FMNH2 + O2 = (Z)-2-((N-methylformamido)methylene)-5-hydroxybutanolactone + FMN + H(+). The catalysed reaction is N-methylnicotinate + FADH2 + O2 = (Z)-2-((N-methylformamido)methylene)-5-hydroxybutanolactone + FAD + H(+). Involved in the degradation of the pyridine ring of trigonelline (TG; N-methylnicotinate) into succinate and methylamine as carbon and nitrogen sources, respectively. Catalyzes the insertion of two oxygens, followed by a ring cleavage of trigonelline to yield (Z)-2-((N-methylformamido)methylene)-5-hydroxybutyrolactone (MFMB). It is able to use reduced FMN or FAD. This Acinetobacter baylyi (strain ATCC 33305 / BD413 / ADP1) protein is Flavin-dependent trigonelline monooxygenase, oxygenase component.